Consider the following 557-residue polypeptide: Potassium-transporting ATPase potassium-binding subunit (557 aa).

12 helical membrane passes run 5–25, 63–83, 132–152, 170–190, 253–273, 283–303, 329–349, 356–376, 379–399, 416–436, 484–504, and 526–546; these read GFLL…PLGS, LCAI…MLLG, GLTV…FALI, LLRI…LFFI, FVQM…FGEV, LLWA…WAEV, VLVS…AVIA, ALGG…FGGV, GLYG…LMIG, LTAL…ALAM, LLAF…MAIA, and LFVG…FIPA.

The protein belongs to the KdpA family. As to quaternary structure, the system is composed of three essential subunits: KdpA, KdpB and KdpC.

Its subcellular location is the cell inner membrane. In terms of biological role, part of the high-affinity ATP-driven potassium transport (or Kdp) system, which catalyzes the hydrolysis of ATP coupled with the electrogenic transport of potassium into the cytoplasm. This subunit binds the periplasmic potassium ions and delivers the ions to the membrane domain of KdpB through an intramembrane tunnel. The chain is Potassium-transporting ATPase potassium-binding subunit from Escherichia coli (strain SE11).